Here is a 472-residue protein sequence, read N- to C-terminus: FAD-dependent monooxygenase ltmM (472 aa).

Residues 7-27 traverse the membrane as a helical segment; it reads VIIVGGSVAGLSLAHCLEKIG. The FAD site is built by Glu34, Gly48, and Arg107. N-linked (GlcNAc...) asparagine glycosylation is present at Asn186. Residues Asp306 and Ala319 each coordinate FAD. Residues 450–470 form a helical membrane-spanning segment; that stretch reads IVYALYLVAAAAFILYCLSSL.

Belongs to the paxM FAD-dependent monooxygenase family. FAD serves as cofactor.

Its subcellular location is the membrane. It functions in the pathway secondary metabolite biosynthesis. Functionally, FAD-dependent monooxygenase; part of the gene cluster that mediates the biosynthesis of lolitrems, indole-diterpene mycotoxins that are potent tremorgens in mammals, and are synthesized by clavicipitaceous fungal endophytes in association with their grass hosts. The geranylgeranyl diphosphate (GGPP) synthase ltmG is proposed to catalyze the first step in lolitremB biosynthesis. LtmG catalyzes a series of iterative condensations of isopentenyl diphosphate (IPP) with dimethylallyl diphosphate (DMAPP), geranyl diphosphate (GPP), and farnesyl diphosphate (FPP), to form GGPP. GGPP then condenses with indole-3-glycerol phosphate to form 3-geranylgeranylindole, an acyclic intermediate, to be incorporated into paxilline. Either ltmG or ltmC could be responsible for this step, as both are putative prenyl transferases. The FAD-dependent monooxygenase ltmM then catalyzes the epoxidation of the two terminal alkenes of the geranylgeranyl moiety, which is subsequently cyclized by ltmB, to paspaline. The cytochrome P450 monooxygenases ltmQ and ltmP can sequentially oxidize paspaline to terpendole E and terpendole F. Alternatively, ltmP converts paspaline to an intermediate which is oxidized by ltmQ to terpendole F. LtmF, ltmK, ltmE and ltmJ appear to be unique to the epichloe endophytes. The prenyltransferase ltmF is involved in the 27-hydroxyl-O-prenylation. The cytochrome P450 monooxygenase ltmK is required for the oxidative acetal ring formation. The multi-functional prenyltransferase ltmE is required for C20- and C21-prenylations of the indole ring of paspalanes and acts together with the cytochrome P450 monooxygenase ltmJ to yield lolitremanes by multiple oxidations and ring closures. The stereoisomer pairs of lolitriol and lolitrem N or lolitrem B and lolitrem F may be attributed to variations in the way in which ring closure can occur under the action of ltmJ. While the major product of this pathway is lolitrem B, the prenyl transferases and cytochrome P450 monooxygenases identified in this pathway have a remarkable versatility in their regio- and stereo-specificities to generate a diverse range of metabolites that are products of a metabolic grid rather than a linear pathway. The sequence is that of FAD-dependent monooxygenase ltmM (ltmM) from Epichloe festucae var. lolii (Neotyphodium lolii).